An 87-amino-acid polypeptide reads, in one-letter code: Glutaredoxin 1 (87 aa).

Positions 1–87 (MFTVIFGRPG…WAKENLNLFA (87 aa)) constitute a Glutaredoxin domain. Residues C11 and C14 are joined by a disulfide bond.

This sequence belongs to the glutaredoxin family. In terms of assembly, monomer.

Its function is as follows. The disulfide bond functions as an electron carrier in the glutathione-dependent synthesis of deoxyribonucleotides by the enzyme ribonucleotide reductase. In addition, it is also involved in reducing some disulfides in a coupled system with glutathione reductase. The protein is Glutaredoxin 1 (grxA) of Salmonella typhi.